A 423-amino-acid polypeptide reads, in one-letter code: 3-phosphoshikimate 1-carboxyvinyltransferase (423 aa).

3-phosphoshikimate contacts are provided by lysine 21, serine 22, and arginine 26. Lysine 21 provides a ligand contact to phosphoenolpyruvate. Residues glycine 92 and arginine 120 each coordinate phosphoenolpyruvate. The 3-phosphoshikimate site is built by serine 164, glutamine 166, aspartate 312, and lysine 339. Residue glutamine 166 coordinates phosphoenolpyruvate. Aspartate 312 functions as the Proton acceptor in the catalytic mechanism. Phosphoenolpyruvate-binding residues include arginine 343 and arginine 385.

The protein belongs to the EPSP synthase family. Monomer.

The protein localises to the cytoplasm. The catalysed reaction is 3-phosphoshikimate + phosphoenolpyruvate = 5-O-(1-carboxyvinyl)-3-phosphoshikimate + phosphate. It functions in the pathway metabolic intermediate biosynthesis; chorismate biosynthesis; chorismate from D-erythrose 4-phosphate and phosphoenolpyruvate: step 6/7. In terms of biological role, catalyzes the transfer of the enolpyruvyl moiety of phosphoenolpyruvate (PEP) to the 5-hydroxyl of shikimate-3-phosphate (S3P) to produce enolpyruvyl shikimate-3-phosphate and inorganic phosphate. In Thermoanaerobacter pseudethanolicus (strain ATCC 33223 / 39E) (Clostridium thermohydrosulfuricum), this protein is 3-phosphoshikimate 1-carboxyvinyltransferase.